Here is a 537-residue protein sequence, read N- to C-terminus: Phosphoenolpyruvate carboxykinase (ATP) (537 aa).

Arg61, Tyr195, and Lys201 together coordinate substrate. ATP-binding positions include Lys201, His220, and 236 to 244; that span reads GLSGTGKTT. Residues Lys201 and His220 each contribute to the Mn(2+) site. Position 257 (Asp257) interacts with Mn(2+). ATP-binding residues include Glu285, Arg323, and Thr448. Arg323 serves as a coordination point for substrate.

This sequence belongs to the phosphoenolpyruvate carboxykinase (ATP) family. Mn(2+) serves as cofactor.

It is found in the cytoplasm. It carries out the reaction oxaloacetate + ATP = phosphoenolpyruvate + ADP + CO2. It participates in carbohydrate biosynthesis; gluconeogenesis. Functionally, involved in the gluconeogenesis. Catalyzes the conversion of oxaloacetate (OAA) to phosphoenolpyruvate (PEP) through direct phosphoryl transfer between the nucleoside triphosphate and OAA. This is Phosphoenolpyruvate carboxykinase (ATP) from Rhodopseudomonas palustris (strain TIE-1).